A 173-amino-acid polypeptide reads, in one-letter code: Crossover junction endodeoxyribonuclease RuvC (173 aa).

Residues Asp8, Glu67, and Asp139 contribute to the active site. 3 residues coordinate Mg(2+): Asp8, Glu67, and Asp139.

It belongs to the RuvC family. As to quaternary structure, homodimer which binds Holliday junction (HJ) DNA. The HJ becomes 2-fold symmetrical on binding to RuvC with unstacked arms; it has a different conformation from HJ DNA in complex with RuvA. In the full resolvosome a probable DNA-RuvA(4)-RuvB(12)-RuvC(2) complex forms which resolves the HJ. Requires Mg(2+) as cofactor.

Its subcellular location is the cytoplasm. It carries out the reaction Endonucleolytic cleavage at a junction such as a reciprocal single-stranded crossover between two homologous DNA duplexes (Holliday junction).. In terms of biological role, the RuvA-RuvB-RuvC complex processes Holliday junction (HJ) DNA during genetic recombination and DNA repair. Endonuclease that resolves HJ intermediates. Cleaves cruciform DNA by making single-stranded nicks across the HJ at symmetrical positions within the homologous arms, yielding a 5'-phosphate and a 3'-hydroxyl group; requires a central core of homology in the junction. The consensus cleavage sequence is 5'-(A/T)TT(C/G)-3'. Cleavage occurs on the 3'-side of the TT dinucleotide at the point of strand exchange. HJ branch migration catalyzed by RuvA-RuvB allows RuvC to scan DNA until it finds its consensus sequence, where it cleaves and resolves the cruciform DNA. This chain is Crossover junction endodeoxyribonuclease RuvC, found in Shewanella putrefaciens (strain CN-32 / ATCC BAA-453).